Reading from the N-terminus, the 390-residue chain is Histamine H4 receptor (390 aa).

Topologically, residues 1 to 19 (MPDTNSTINLSLSTRVTLA) are extracellular. Residues N5 and N9 are each glycosylated (N-linked (GlcNAc...) asparagine). The helical transmembrane segment at 20-40 (FFMSLVAFAIMLGNALVILAF) threads the bilayer. Topologically, residues 41–52 (VVDKNLRHRSSY) are cytoplasmic. Residues 53-73 (FFLNLAISDFFVGVISIPLYI) traverse the membrane as a helical segment. The Extracellular portion of the chain corresponds to 74-87 (PHTLFEWDFGKEIC). Residues C87 and C164 are joined by a disulfide bond. Residues 88-108 (VFWLTTDYLLCTASVYNIVLI) traverse the membrane as a helical segment. At 109 to 131 (SYDRYLSVSNAVSYRTQHTGVLK) the chain is on the cytoplasmic side. A helical membrane pass occupies residues 132-152 (IVTLMVAVWVLAFLVNGPMIL). The Extracellular segment spans residues 153-172 (VSESWKDEGSECEPGFFSEW). A helical transmembrane segment spans residues 173–193 (YILAITSFLEFVIPVILVAYF). The Cytoplasmic portion of the chain corresponds to 194–304 (NMNIYWSLWK…LLRARRLAKS (111 aa)). Residues 305-325 (LAILLGVFAVCWAPYSLFTIV) traverse the membrane as a helical segment. Topologically, residues 326–341 (LSFYSSATGPKSVWYR) are extracellular. The helical transmembrane segment at 342–362 (IAFWLQWFNSFVNPLLYPLCH) threads the bilayer. The Cytoplasmic portion of the chain corresponds to 363-390 (KRFQKAFLKIFCIKKQPLPSQHSRSVSS).

Belongs to the G-protein coupled receptor 1 family. In terms of assembly, interacts with TSPAN4. Expressed primarily in the bone marrow and eosinophils. Shows preferential distribution in cells of immunological relevance such as T-cells, dendritic cells, monocytes, mast cells, neutrophils. Also expressed in a wide variety of peripheral tissues, including the heart, kidney, liver, lung, pancreas, skeletal muscle, prostate, small intestine, spleen, testis, colon, fetal liver and lymph node.

It is found in the cell membrane. In terms of biological role, the H4 subclass of histamine receptors could mediate the histamine signals in peripheral tissues. Displays a significant level of constitutive activity (spontaneous activity in the absence of agonist). The protein is Histamine H4 receptor (HRH4) of Homo sapiens (Human).